The sequence spans 381 residues: MSNPSPQAPEEEASTSVCRPQSCSMASASRRHRRERRFRRYLSAGRLVRAQALLQRHPGLDVDAGQPPPLHRACARHDAPALCLLLRLGADPAHQDRHGDTALHAAARQGPDAYTDFFLPLLSRCPSAMGIKNKDGETPGQILGWGPPWDSAEEEEDEEVSKEREWRQKLQGELEDEWQEVIGRFEDDASRDTQEPESFSAWSERLAREHAQKQRQQLEAEGSCRPPRAEGSSHSWRQHEEEQRLFRERARAKEKELCESRARRAQEAQRDKGPEPPRAGPRAEHPRGAERGSLWRFGDVPWPCPGGGDPEAMAAALVARGPPLEEQGALKRYLRVQQVRWHPDRFLQRFRSQIETWELGRVMGAVTALSQALNRHAEALK.

The tract at residues 1–34 (MSNPSPQAPEEEASTSVCRPQSCSMASASRRHRR) is disordered. Polar residues predominate over residues 14–27 (STSVCRPQSCSMAS). ANK repeat units lie at residues 64 to 93 (AGQP…ADPA) and 97 to 134 (RHGD…IKNK). Disordered regions lie at residues 132-167 (KNKD…REWR) and 186-298 (EDDA…WRFG). Position 151 is a phosphoserine (S151). Residues 151 to 160 (SAEEEEDEEV) are compositionally biased toward acidic residues. Basic and acidic residues-rich tracts occupy residues 205-218 (RLAR…RQQL) and 237-290 (RQHE…RGAE).

Interacts with CACTIN (via N-terminal domain); the interaction occurs in a pro-inflammatory-independent manner. As to expression, high expression found in heart muscle, liver, kidney and skin. Not detected in spleen, lung and brain.

It localises to the nucleus. Its function is as follows. Involved in the regulation of innate immune response. Acts as negative regulator of Toll-like receptor and interferon-regulatory factor (IRF) signaling pathways. Contributes to the negative regulation of transcriptional activation of NF-kappa-B target genes in response to endogenous pro-inflammatory stimuli. The polypeptide is NF-kappa-B inhibitor-like protein 1 (Nfkbil1) (Mus musculus (Mouse)).